The chain runs to 135 residues: Retinol-binding protein 1 (135 aa).

The interval 22 to 32 (RALDVNVALRK) is important for interaction with STRA6. All-trans-retinol-binding residues include Lys41, Met63, and Gln109.

Belongs to the calycin superfamily. Fatty-acid binding protein (FABP) family. In terms of assembly, interacts (only as retinol-free apoprotein) with STRA6.

It is found in the cytoplasm. It localises to the lipid droplet. In terms of biological role, cytoplasmic retinol-binding protein. Accepts retinol from the transport protein STRA6, and thereby contributes to retinol uptake, storage and retinoid homeostasis. The polypeptide is Retinol-binding protein 1 (RBP1) (Bos taurus (Bovine)).